The primary structure comprises 523 residues: MAAVGRVGSFGSSPPGLASTYASGPLANELASGSGGPAAGDDEDGQNLWSCILSEVSTRSRSKLPTGKNVLLLGEDGAGKTSLIRRIQGIEEYKKGRGLEYLYLNVHDEDRDDQTRCNVWILDGDLYHKGLLKFSLDALSLRDTLVMLVVDMSKPWTALDSLQKWASVVREHVDKLKIPPEEMKEMEQKLIRDFQEYVEPGEDFPASPQRRTTGAQEDRGDSVVLPLGADTLTHNLGLPVLVVCTKCDAISVLEKEHDYRDEHFDFIQSHIRKFCLQYGAALIYTSVKENKNIDLVYKYIVQKLYGFPYKIPAVVVEKDAVFIPAGWDNDKKIGILHENFQTLKVEDNFEDIITKPPVRKFVHEKEIMAEDDQVFLMKLQSLLAKQPPTAAGRPVDASPRVPGGSPRTPNRSVSSNVASVSPIPAGSKKIDPNMKAGATSEGVLANFFNSLLSKKTGSPGGPGVGGSPGGGAAGASPSLPPSAKKSGQKPVLSDVHAELDRITRKPASVSPTTPTSPTEGEAS.

Residues 1–25 (MAAVGRVGSFGSSPPGLASTYASGP) form a disordered region. 74-81 (GEDGAGKT) provides a ligand contact to ATP. Disordered stretches follow at residues 200–219 (PGED…QEDR), 387–434 (PPTA…DPNM), and 457–523 (GSPG…GEAS). At S207 the chain carries Phosphoserine. Residue T213 is modified to Phosphothreonine. 2 positions are modified to phosphoserine: S398 and S405. T408 is subject to Phosphothreonine. Phosphoserine is present on residues S412, S419, S421, and S427. Low complexity predominate over residues 412–421 (SVSSNVASVS). Residues 458–473 (SPGGPGVGGSPGGGAA) are compositionally biased toward gly residues. Over residues 474-485 (GASPSLPPSAKK) the composition is skewed to low complexity. S486 and S510 each carry phosphoserine. Residues 506–523 (PASVSPTTPTSPTEGEAS) show a composition bias toward low complexity. T512, T513, and T515 each carry phosphothreonine. The residue at position 516 (S516) is a Phosphoserine.

Belongs to the dynein light intermediate chain family. In terms of assembly, homodimer. The cytoplasmic dynein 1 complex consists of two catalytic heavy chains (HCs) and a number of non-catalytic subunits presented by intermediate chains (ICs), light intermediate chains (LICs) and light chains (LCs); the composition seems to vary in respect to the IC, LIC and LC composition. The heavy chain homodimer serves as a scaffold for the probable homodimeric assembly of the respective non-catalytic subunits. The ICs and LICs bind directly to the HC dimer and the LCs assemble on the IC dimer. Self-associates. Interacts with DYNC1H1; DYNC1LI1 and DYNC1LI2 bind mutually exclusive to DYNC1H1. Interacts with PCNT. Forms a complex with RAB11FIP3 and RAB11A1; the interaction between DYNC1LI1 and RAB11FIP3 is direct and induces DYNC1LI1 localization onto endosomal membrane; the complex regulates endocytic trafficking. Interacts with RUFY3. In terms of processing, phosphorylated during mitosis but not in interphase.

The protein resides in the cytoplasm. It is found in the chromosome. It localises to the centromere. The protein localises to the kinetochore. Its subcellular location is the cytoskeleton. The protein resides in the spindle pole. It is found in the recycling endosome membrane. In terms of biological role, acts as one of several non-catalytic accessory components of the cytoplasmic dynein 1 complex that are thought to be involved in linking dynein to cargos and to adapter proteins that regulate dynein function. Cytoplasmic dynein 1 acts as a motor for the intracellular retrograde motility of vesicles and organelles along microtubules. May play a role in binding dynein to membranous organelles or chromosomes. Probably involved in the microtubule-dependent transport of pericentrin. Is required for progress through the spindle assembly checkpoint. The phosphorylated form appears to be involved in the selective removal of MAD1L1 and MAD1L2 but not BUB1B from kinetochores. Forms a functional Rab11/RAB11FIP3/dynein complex onto endosomal membrane that regulates the movement of peripheral sorting endosomes (SE) along microtubule tracks toward the microtubule organizing center/centrosome, generating the endosomal recycling compartment (ERC). This chain is Cytoplasmic dynein 1 light intermediate chain 1 (Dync1li1), found in Mus musculus (Mouse).